The primary structure comprises 183 residues: MKNVTHSFVFLAHWPSAGSFGLNTDILATNLINLTVVVGVLIYFGKGVLKDLLDNRKQRILSTIRNSEELRRGTIEQLEKARIRLQKVELEADEYRMNGYSEIEREKANLINATSISLEQLEKSKNETLYFEKQRAMNQVRQRVFQQAVQGALGTLNSCLNTELHFRTIRANISILGAMEWKS.

Residues 27–49 (LATNLINLTVVVGVLIYFGKGVL) form a helical membrane-spanning segment.

Belongs to the ATPase B chain family. In terms of assembly, F-type ATPases have 2 components, F(1) - the catalytic core - and F(0) - the membrane proton channel. F(1) has five subunits: alpha(3), beta(3), gamma(1), delta(1), epsilon(1). F(0) has four main subunits: a(1), b(1), b'(1) and c(10-14). The alpha and beta chains form an alternating ring which encloses part of the gamma chain. F(1) is attached to F(0) by a central stalk formed by the gamma and epsilon chains, while a peripheral stalk is formed by the delta, b and b' chains.

It is found in the plastid. Its subcellular location is the chloroplast thylakoid membrane. Functionally, f(1)F(0) ATP synthase produces ATP from ADP in the presence of a proton or sodium gradient. F-type ATPases consist of two structural domains, F(1) containing the extramembraneous catalytic core and F(0) containing the membrane proton channel, linked together by a central stalk and a peripheral stalk. During catalysis, ATP synthesis in the catalytic domain of F(1) is coupled via a rotary mechanism of the central stalk subunits to proton translocation. In terms of biological role, component of the F(0) channel, it forms part of the peripheral stalk, linking F(1) to F(0). This is ATP synthase subunit b, chloroplastic from Oryza nivara (Indian wild rice).